A 339-amino-acid chain; its full sequence is UDP-N-acetylglucosamine--N-acetylmuramyl-(pentapeptide) pyrophosphoryl-undecaprenol N-acetylglucosamine transferase (339 aa).

UDP-N-acetyl-alpha-D-glucosamine contacts are provided by residues threonine 11–glycine 13, asparagine 127, arginine 170, serine 188, isoleucine 235, and glutamine 280.

The protein belongs to the glycosyltransferase 28 family. MurG subfamily.

Its subcellular location is the cell inner membrane. The enzyme catalyses di-trans,octa-cis-undecaprenyl diphospho-N-acetyl-alpha-D-muramoyl-L-alanyl-D-glutamyl-meso-2,6-diaminopimeloyl-D-alanyl-D-alanine + UDP-N-acetyl-alpha-D-glucosamine = di-trans,octa-cis-undecaprenyl diphospho-[N-acetyl-alpha-D-glucosaminyl-(1-&gt;4)]-N-acetyl-alpha-D-muramoyl-L-alanyl-D-glutamyl-meso-2,6-diaminopimeloyl-D-alanyl-D-alanine + UDP + H(+). The protein operates within cell wall biogenesis; peptidoglycan biosynthesis. Its function is as follows. Cell wall formation. Catalyzes the transfer of a GlcNAc subunit on undecaprenyl-pyrophosphoryl-MurNAc-pentapeptide (lipid intermediate I) to form undecaprenyl-pyrophosphoryl-MurNAc-(pentapeptide)GlcNAc (lipid intermediate II). This chain is UDP-N-acetylglucosamine--N-acetylmuramyl-(pentapeptide) pyrophosphoryl-undecaprenol N-acetylglucosamine transferase, found in Thermotoga sp. (strain RQ2).